The chain runs to 416 residues: Phosphoglycerate kinase (416 aa).

14 residues coordinate (2R)-3-phosphoglycerate: valine 22, aspartate 23, phenylalanine 24, asparagine 25, glutamine 37, arginine 38, serine 61, histidine 62, glycine 64, arginine 65, leucine 120, arginine 121, histidine 168, and arginine 169. Glycine 212 is a binding site for ADP. CDP is bound at residue glycine 212. AMP-binding residues include alanine 213 and lysine 214. Alanine 213 is a binding site for ATP. Alanine 213 serves as a coordination point for Mg(2+). Aspartate 217 contributes to the CDP binding site. A Mg(2+)-binding site is contributed by aspartate 217. Position 218 (lysine 218) interacts with AMP. Position 218 (lysine 218) interacts with ATP. ADP is bound at residue glycine 236. Glycine 236 is a CDP binding site. The AMP site is built by glycine 237 and glycine 311. ATP-binding residues include glycine 237 and glycine 311. Residues glycine 336 and phenylalanine 341 each coordinate CDP. Position 341 (phenylalanine 341) interacts with ADP. Residue glutamate 342 participates in AMP binding. ATP contacts are provided by glutamate 342, aspartate 373, and threonine 374. Aspartate 373 contacts Mg(2+).

The protein belongs to the phosphoglycerate kinase family. As to quaternary structure, monomer. Requires Mg(2+) as cofactor. In terms of tissue distribution, expressed in all cells of the worm (at protein level), higher expression in the cells associated with the tubercles (tegumental modifications), the muscle and along the tegument.

It carries out the reaction (2R)-3-phosphoglycerate + ATP = (2R)-3-phospho-glyceroyl phosphate + ADP. It participates in carbohydrate degradation; glycolysis; pyruvate from D-glyceraldehyde 3-phosphate: step 2/5. Its function is as follows. Involved in the seventh step in glycolysis. Catalyzes the conversion of 1,3-bisphosphoglycerate ((2R)-3-phospho-glyceroyl phosphate) to 3-phosphoglycerate ((2R)-3-phosphoglycerate) and results in the formation of ATP. Associated with the tegument to provide the energy needed for the tegumental repair resulting from immune damage. This chain is Phosphoglycerate kinase (PGK), found in Schistosoma mansoni (Blood fluke).